Reading from the N-terminus, the 141-residue chain is 6,7-dimethyl-8-ribityllumazine synthase (141 aa).

5-amino-6-(D-ribitylamino)uracil contacts are provided by residues Phe11, 42–44 (ALE), and 66–68 (VVI). 71–72 (ET) contributes to the (2S)-2-hydroxy-3-oxobutyl phosphate binding site. The active-site Proton donor is His74. Asn98 contributes to the 5-amino-6-(D-ribitylamino)uracil binding site. (2S)-2-hydroxy-3-oxobutyl phosphate is bound at residue Arg112.

This sequence belongs to the DMRL synthase family.

It catalyses the reaction (2S)-2-hydroxy-3-oxobutyl phosphate + 5-amino-6-(D-ribitylamino)uracil = 6,7-dimethyl-8-(1-D-ribityl)lumazine + phosphate + 2 H2O + H(+). The protein operates within cofactor biosynthesis; riboflavin biosynthesis; riboflavin from 2-hydroxy-3-oxobutyl phosphate and 5-amino-6-(D-ribitylamino)uracil: step 1/2. Functionally, catalyzes the formation of 6,7-dimethyl-8-ribityllumazine by condensation of 5-amino-6-(D-ribitylamino)uracil with 3,4-dihydroxy-2-butanone 4-phosphate. This is the penultimate step in the biosynthesis of riboflavin. The protein is 6,7-dimethyl-8-ribityllumazine synthase of Sphingopyxis alaskensis (strain DSM 13593 / LMG 18877 / RB2256) (Sphingomonas alaskensis).